Reading from the N-terminus, the 319-residue chain is UDP-N-acetylenolpyruvoylglucosamine reductase (319 aa).

The FAD-binding PCMH-type domain occupies valine 35 to aspartate 198. Arginine 178 is a catalytic residue. Residue serine 227 is the Proton donor of the active site. The active site involves glutamate 302.

The protein belongs to the MurB family. It depends on FAD as a cofactor.

Its subcellular location is the cytoplasm. It catalyses the reaction UDP-N-acetyl-alpha-D-muramate + NADP(+) = UDP-N-acetyl-3-O-(1-carboxyvinyl)-alpha-D-glucosamine + NADPH + H(+). The protein operates within cell wall biogenesis; peptidoglycan biosynthesis. Functionally, cell wall formation. This is UDP-N-acetylenolpyruvoylglucosamine reductase from Rhodospirillum rubrum (strain ATCC 11170 / ATH 1.1.1 / DSM 467 / LMG 4362 / NCIMB 8255 / S1).